A 536-amino-acid chain; its full sequence is Glycine--tRNA ligase (536 aa).

The insert stretch occupies residues 56–67 (LVSPAGAPSTFE). Substrate is bound by residues Arg106 and Glu213. Residues 245–247 (RNE), 255–260 (FRSREF), and 333–334 (EL) each bind ATP. Residue 260–264 (FEQME) coordinates substrate. The segment at 350–372 (EGKLDPATNPMTVELNEHGKPKH) is insert. 396–400 (EPSAG) lines the substrate pocket. An ATP-binding site is contributed by 400–403 (GADR).

It belongs to the class-II aminoacyl-tRNA synthetase family. Homodimer.

The protein resides in the cytoplasm. The catalysed reaction is tRNA(Gly) + glycine + ATP = glycyl-tRNA(Gly) + AMP + diphosphate. Its function is as follows. Catalyzes the attachment of glycine to tRNA(Gly). The chain is Glycine--tRNA ligase from Rhodopirellula baltica (strain DSM 10527 / NCIMB 13988 / SH1).